A 202-amino-acid chain; its full sequence is Solute carrier family 66 member 3 (202 aa).

Positions 1-19 (MEAGLLWFCNWSTLGVCAA) are cleaved as a signal peptide. 4 consecutive transmembrane segments (helical) span residues 33 to 53 (SARG…LVFL), 64 to 84 (LTYL…LFVF), 94 to 114 (LPYM…KWII), and 171 to 191 (LTIL…TATV).

Its subcellular location is the membrane. The polypeptide is Solute carrier family 66 member 3 (Slc66a3) (Mus musculus (Mouse)).